The sequence spans 556 residues: Potassium-transporting ATPase potassium-binding subunit (556 aa).

The next 10 membrane-spanning stretches (helical) occupy residues 5–25, 65–85, 133–153, 176–196, 249–269, 283–303, 377–397, 415–435, 483–503, and 526–546; these read LAGI…HVPL, SVLA…LVQG, GLAV…IALV, IRIL…GGAI, PTTW…FSLP, YAIV…TLFF, AGLY…GLMV, LAAT…AVAM, ALGL…LALA, and FVGM…LPML.

This sequence belongs to the KdpA family. In terms of assembly, the system is composed of three essential subunits: KdpA, KdpB and KdpC.

The protein resides in the cell membrane. Part of the high-affinity ATP-driven potassium transport (or Kdp) system, which catalyzes the hydrolysis of ATP coupled with the electrogenic transport of potassium into the cytoplasm. This subunit binds the extracellular potassium ions and delivers the ions to the membrane domain of KdpB through an intramembrane tunnel. The chain is Potassium-transporting ATPase potassium-binding subunit from Mycolicibacterium vanbaalenii (strain DSM 7251 / JCM 13017 / BCRC 16820 / KCTC 9966 / NRRL B-24157 / PYR-1) (Mycobacterium vanbaalenii).